The following is a 212-amino-acid chain: Glycerol-3-phosphate acyltransferase (212 aa).

The next 4 membrane-spanning stretches (helical) occupy residues 3–23, 78–98, 115–135, and 155–177; these read ILLA…VVVS, DVAV…PVFF, AVHP…AFFF, and FLFG…LLVW.

It belongs to the PlsY family. In terms of assembly, probably interacts with PlsX.

The protein resides in the cell inner membrane. The catalysed reaction is an acyl phosphate + sn-glycerol 3-phosphate = a 1-acyl-sn-glycero-3-phosphate + phosphate. It functions in the pathway lipid metabolism; phospholipid metabolism. Functionally, catalyzes the transfer of an acyl group from acyl-phosphate (acyl-PO(4)) to glycerol-3-phosphate (G3P) to form lysophosphatidic acid (LPA). This enzyme utilizes acyl-phosphate as fatty acyl donor, but not acyl-CoA or acyl-ACP. The chain is Glycerol-3-phosphate acyltransferase from Burkholderia ambifaria (strain ATCC BAA-244 / DSM 16087 / CCUG 44356 / LMG 19182 / AMMD) (Burkholderia cepacia (strain AMMD)).